The primary structure comprises 118 residues: Protein MGF 110-6L (118 aa).

Positions 1–18 are cleaved as a signal peptide; sequence MLVTFLGILGLLASQVSS. The short motif at 115-118 is the Prevents secretion from ER element; the sequence is KDEL.

This sequence belongs to the asfivirus MGF 110 family. Post-translationally, N-glycosylated.

It is found in the host endoplasmic reticulum lumen. Plays a role in virus cell tropism, and may be required for efficient virus replication in macrophages. This Ornithodoros (relapsing fever ticks) protein is Protein MGF 110-6L.